Reading from the N-terminus, the 258-residue chain is MAADLSAYPDRESELTHALAAMRSRLAAAAEAAGRNVGEIELLPITKFFPATDVAILFRLGCRSVGESREQEASAKMAELNRLLAAAELGHSGGVHWHMVGRIQRNKAGSLARWAHTAHSVDSSRLVTALDRAVVAALAEHRRGERLRVYVQVSLDGDGSRGGVDSTTPGAVDRICAQVQESEGLELVGLMGIPPLDWDPDEAFDRLQSEHNRVRAMFPHAIGLSAGMSNDLEVAVKHGSTCVRVGTALLGPRRLRSP.

Lysine 47 carries the N6-(pyridoxal phosphate)lysine modification.

The protein belongs to the pyridoxal phosphate-binding protein YggS/PROSC family.

Pyridoxal 5'-phosphate (PLP)-binding protein, which is involved in PLP homeostasis. The protein is Pyridoxal phosphate homeostasis protein of Mycobacterium bovis (strain ATCC BAA-935 / AF2122/97).